Reading from the N-terminus, the 327-residue chain is Tartrate-resistant acid phosphatase type 5 (327 aa).

The signal sequence occupies residues 1 to 22; sequence MDTWMVLLGLQILLLPLLAHCT. Residues Asp-35, Asp-73, Tyr-76, and Asn-112 each contribute to the Fe cation site. Residues Asn-118 and Asn-149 are each glycosylated (N-linked (GlcNAc...) asparagine). A disulfide bond links Cys-163 and Cys-221. Fe cation-binding residues include His-207, His-242, and His-244.

As to quaternary structure, exists either as monomer or, after proteolytic processing, as a dimer of two chains linked by disulfide bond(s). The cofactor is Fe cation. In terms of tissue distribution, characteristic constituent of osteoclasts and some mononuclear preosteoclasts. Preferentially expressed in skeletal tissues.

The protein resides in the lysosome. It catalyses the reaction a phosphate monoester + H2O = an alcohol + phosphate. In terms of biological role, may play a role in the process of bone resorption. The osteoclastic trap acts on nucleotide tri- and diphosphates with higher affinity, compared with other substrates. The polypeptide is Tartrate-resistant acid phosphatase type 5 (Acp5) (Rattus norvegicus (Rat)).